The primary structure comprises 446 residues: Mannan endo-1,6-alpha-mannosidase DCW1 (446 aa).

Residues 1 to 18 form the signal peptide; that stretch reads MRLVTLLSGLVSLVSVFG. 12 N-linked (GlcNAc...) asparagine glycosylation sites follow: Asn-31, Asn-81, Asn-106, Asn-200, Asn-222, Asn-237, Asn-262, Asn-278, Asn-285, Asn-334, Asn-391, and Asn-397. A disordered region spans residues 389–408; that stretch reads PYNATNGGNSTGDGAAGTKP. Residue Ser-422 is the site of GPI-anchor amidated serine attachment. A propeptide spans 423-446 (removed in mature form); it reads RAGAGIITAIIGISIIACALWLVY.

Belongs to the glycosyl hydrolase 76 family.

The protein resides in the secreted. Its subcellular location is the cell wall. It localises to the cell membrane. It catalyses the reaction Random hydrolysis of (1-&gt;6)-alpha-D-mannosidic linkages in unbranched (1-&gt;6)-mannans.. Functionally, required for normal synthesis of the cell wall. In Candida glabrata (strain ATCC 2001 / BCRC 20586 / JCM 3761 / NBRC 0622 / NRRL Y-65 / CBS 138) (Yeast), this protein is Mannan endo-1,6-alpha-mannosidase DCW1 (DCW1).